We begin with the raw amino-acid sequence, 130 residues long: Small ribosomal subunit protein uS9 (130 aa).

It belongs to the universal ribosomal protein uS9 family.

This Variovorax paradoxus (strain S110) protein is Small ribosomal subunit protein uS9.